The primary structure comprises 334 residues: Trans-1,2-dihydrobenzene-1,2-diol dehydrogenase (334 aa).

The protein belongs to the Gfo/Idh/MocA family. Homodimer. In terms of tissue distribution, small intestine.

It carries out the reaction (1R,2R)-1,2-dihydrobenzene-1,2-diol + NADP(+) = catechol + NADPH + H(+). It catalyses the reaction D-xylose + NADP(+) = D-xylono-1,5-lactone + NADPH + H(+). In Homo sapiens (Human), this protein is Trans-1,2-dihydrobenzene-1,2-diol dehydrogenase (DHDH).